Consider the following 335-residue polypeptide: Glucokinase (335 aa).

Ala-11 to Thr-16 serves as a coordination point for ATP.

This sequence belongs to the bacterial glucokinase family.

Its subcellular location is the cytoplasm. It carries out the reaction D-glucose + ATP = D-glucose 6-phosphate + ADP + H(+). In Xanthomonas axonopodis pv. citri (strain 306), this protein is Glucokinase.